The chain runs to 1086 residues: Lysine-specific demethylase 4B (1086 aa).

The JmjN domain occupies 15–57 (IMTFRPTMDEFRDFNRYVAYIESQGAHRAGLAKIIPPKEWKPR). Y133 lines the 2-oxoglutarate pocket. A JmjC domain is found at 146–309 (VAQWNIGNLR…YGKVATQCTC (164 aa)). H189 and E191 together coordinate Fe cation. 2-oxoglutarate contacts are provided by N199 and K207. Zn(2+) is bound by residues C235 and H241. K242 provides a ligand contact to 2-oxoglutarate. Fe cation is bound at residue H277. Positions 307 and 309 each coordinate Zn(2+). Positions 379–395 (SRPWRKAEEERRREPTR) are enriched in basic and acidic residues. 2 disordered regions span residues 379-536 (SRPW…PPGA) and 575-624 (PMEL…LSVV). The span at 401–410 (SHRRRSQPKK) shows a compositional bias: basic residues. Residues 441–450 (MPEDEEEEEL) are compositionally biased toward acidic residues. The span at 456–467 (HEAEGVEEDGRG) shows a compositional bias: basic and acidic residues. Over residues 468 to 480 (KPRPTKARNKKKT) the composition is skewed to basic residues. The span at 512-522 (GPAMGPMAAEG) shows a compositional bias: low complexity. Polar residues predominate over residues 585–597 (QAQAGDSQGTTPF). K599 bears the N6-acetyllysine mark. Residues 719-777 (MCFTSSGENTEPLPANSYVGEDGTSPLISCAHCCLQVHASCYGVRPELAKEGWTCSRCA) form a PHD-type 1 zinc finger. Residues 782–815 (TAECCLCNLRGGALQRTTEHRWIHVICAIAVPEV) form a C2HC pre-PHD-type zinc finger. Residues 838–895 (LKCIYCRKRMKRVSGACIQCSYEHCSTSFHVTCAHAAGVLMEPDDWPYVVSITCLKHR) form a PHD-type 2 zinc finger. Tudor domains follow at residues 905–962 (RTVS…CLRL) and 963–1019 (GPPP…EELP). Residues 1024-1043 (SRLSLSTGTPQEPSFSGDDV) form a disordered region. Residues 1026-1037 (LSLSTGTPQEPS) show a composition bias toward polar residues.

This sequence belongs to the JHDM3 histone demethylase family. Fe(2+) is required as a cofactor.

The protein resides in the nucleus. The enzyme catalyses N(6),N(6),N(6)-trimethyl-L-lysyl(9)-[histone H3] + 2 2-oxoglutarate + 2 O2 = N(6)-methyl-L-lysyl(9)-[histone H3] + 2 formaldehyde + 2 succinate + 2 CO2. Its function is as follows. Histone demethylase that specifically demethylates 'Lys-9' of histone H3, thereby playing a role in histone code. Does not demethylate histone H3 'Lys-4', H3 'Lys-27', H3 'Lys-36' nor H4 'Lys-20'. Only able to demethylate trimethylated H3 'Lys-9', with a weaker activity than KDM4A, KDM4C and KDM4D. Demethylation of Lys residue generates formaldehyde and succinate. Plays a critical role in the development of the central nervous system (CNS). This is Lysine-specific demethylase 4B (Kdm4b) from Mus musculus (Mouse).